We begin with the raw amino-acid sequence, 361 residues long: Histidinol-phosphate aminotransferase (361 aa).

An N6-(pyridoxal phosphate)lysine modification is found at Lys-219.

The protein belongs to the class-II pyridoxal-phosphate-dependent aminotransferase family. Histidinol-phosphate aminotransferase subfamily. In terms of assembly, homodimer. The cofactor is pyridoxal 5'-phosphate.

The enzyme catalyses L-histidinol phosphate + 2-oxoglutarate = 3-(imidazol-4-yl)-2-oxopropyl phosphate + L-glutamate. Its pathway is amino-acid biosynthesis; L-histidine biosynthesis; L-histidine from 5-phospho-alpha-D-ribose 1-diphosphate: step 7/9. This Acinetobacter baumannii (strain SDF) protein is Histidinol-phosphate aminotransferase.